A 53-amino-acid chain; its full sequence is MRDDDDLVPPKWRPLFNNQDWLLHDIVVKSFYGFGVIAAIAHLLVYLWKPWLP.

Met-1 bears the N-formylmethionine mark. The Cytoplasmic portion of the chain corresponds to Met-1–Asp-25. Residues His-24 and His-42 each contribute to the a bacteriochlorophyll site. A helical membrane pass occupies residues Ile-26–Trp-48. The Periplasmic portion of the chain corresponds to Lys-49–Pro-53.

Belongs to the antenna complex beta subunit family. In terms of assembly, the core complex is formed by different alpha and beta chains, binding bacteriochlorophyll molecules, and arranged most probably in tetrameric structures disposed around the reaction center. The non-pigmented gamma chains may constitute additional components.

The protein resides in the cell membrane. In terms of biological role, antenna complexes are light-harvesting systems, which transfer the excitation energy to the reaction centers. The sequence is that of Light-harvesting protein B-808/866 beta chain (puf2B) from Chloroflexus aurantiacus (strain ATCC 29366 / DSM 635 / J-10-fl).